The following is a 266-amino-acid chain: 3-methyl-2-oxobutanoate hydroxymethyltransferase (266 aa).

Asp43 and Asp82 together coordinate Mg(2+). Residues 43-44, Asp82, and Lys110 each bind 3-methyl-2-oxobutanoate; that span reads DS. Position 112 (Glu112) interacts with Mg(2+). The active-site Proton acceptor is the Glu179.

It belongs to the PanB family. As to quaternary structure, homodecamer; pentamer of dimers. Requires Mg(2+) as cofactor.

It is found in the cytoplasm. It carries out the reaction 3-methyl-2-oxobutanoate + (6R)-5,10-methylene-5,6,7,8-tetrahydrofolate + H2O = 2-dehydropantoate + (6S)-5,6,7,8-tetrahydrofolate. The protein operates within cofactor biosynthesis; (R)-pantothenate biosynthesis; (R)-pantoate from 3-methyl-2-oxobutanoate: step 1/2. Its function is as follows. Catalyzes the reversible reaction in which hydroxymethyl group from 5,10-methylenetetrahydrofolate is transferred onto alpha-ketoisovalerate to form ketopantoate. This is 3-methyl-2-oxobutanoate hydroxymethyltransferase from Psychrobacter cryohalolentis (strain ATCC BAA-1226 / DSM 17306 / VKM B-2378 / K5).